The sequence spans 316 residues: Beta-ketoacyl-[acyl-carrier-protein] synthase III (316 aa).

Residues Cys-112 and His-243 contribute to the active site. Positions 244–248 (QANLR) are ACP-binding. Residue Asn-273 is part of the active site.

Belongs to the thiolase-like superfamily. FabH family. In terms of assembly, homodimer.

The protein resides in the cytoplasm. The enzyme catalyses malonyl-[ACP] + acetyl-CoA + H(+) = 3-oxobutanoyl-[ACP] + CO2 + CoA. Its pathway is lipid metabolism; fatty acid biosynthesis. In terms of biological role, catalyzes the condensation reaction of fatty acid synthesis by the addition to an acyl acceptor of two carbons from malonyl-ACP. Catalyzes the first condensation reaction which initiates fatty acid synthesis and may therefore play a role in governing the total rate of fatty acid production. Possesses both acetoacetyl-ACP synthase and acetyl transacylase activities. Its substrate specificity determines the biosynthesis of branched-chain and/or straight-chain of fatty acids. The chain is Beta-ketoacyl-[acyl-carrier-protein] synthase III from Histophilus somni (strain 129Pt) (Haemophilus somnus).